Here is a 442-residue protein sequence, read N- to C-terminus: Tyrosine--tRNA ligase (442 aa).

Tyr-55 contacts L-tyrosine. The 'HIGH' region signature appears at 60-69 (PTAPSLHLGN). The L-tyrosine site is built by Tyr-190 and Gln-194. Residues 250 to 254 (KFGKS) carry the 'KMSKS' region motif. ATP is bound at residue Lys-253. One can recognise an S4 RNA-binding domain in the interval 373–438 (VAIAQALVDT…GKKTLAGVFV (66 aa)).

The protein belongs to the class-I aminoacyl-tRNA synthetase family. TyrS type 1 subfamily. Homodimer.

The protein resides in the cytoplasm. It carries out the reaction tRNA(Tyr) + L-tyrosine + ATP = L-tyrosyl-tRNA(Tyr) + AMP + diphosphate + H(+). Catalyzes the attachment of tyrosine to tRNA(Tyr) in a two-step reaction: tyrosine is first activated by ATP to form Tyr-AMP and then transferred to the acceptor end of tRNA(Tyr). This chain is Tyrosine--tRNA ligase, found in Leifsonia xyli subsp. xyli (strain CTCB07).